Consider the following 301-residue polypeptide: Small ribosomal subunit protein uS2 (301 aa).

The protein belongs to the universal ribosomal protein uS2 family. As to quaternary structure, component of the small ribosomal subunit. Mature ribosomes consist of a small (40S) and a large (60S) subunit. The 40S subunit contains about 33 different proteins and 1 molecule of RNA (18S). The 60S subunit contains about 49 different proteins and 3 molecules of RNA (25S, 5.8S and 5S). Interacts with RPS21.

It is found in the cytoplasm. In terms of biological role, required for the assembly and/or stability of the 40S ribosomal subunit. Required for the processing of the 20S rRNA-precursor to mature 18S rRNA in a late step of the maturation of 40S ribosomal subunits. The polypeptide is Small ribosomal subunit protein uS2 (Ajellomyces dermatitidis (strain ER-3 / ATCC MYA-2586) (Blastomyces dermatitidis)).